A 379-amino-acid polypeptide reads, in one-letter code: Centrosomal protein 43 (379 aa).

The LisH domain occupies 70–102 (DGRLVASLVAEFLQFFNLDFTLAVFQPETSTLQ). The disordered stretch occupies residues 139-196 (EKGPTTGEGALDLSDVHPPPKSPEGKTSAQTTPSKKANNEANQSDTSVSLSEPKSKSS). The residue at position 143 (T143) is a Phosphothreonine. S152 and S160 each carry phosphoserine. The segment covering 163–184 (GKTSAQTTPSKKANNEANQSDT) has biased composition (polar residues). Phosphothreonine is present on T170. The residue at position 182 (S182) is a Phosphoserine. A compositionally biased stretch (low complexity) spans 185–196 (SVSLSEPKSKSS). T214 carries the phosphothreonine modification. Residues 216–288 (DGKDKAGLCP…APSLKDSESK (73 aa)) form a disordered region. The segment covering 225-236 (PDEDDMEGDSFF) has biased composition (acidic residues). The segment covering 239–255 (PIPKPEKTYGLRSEPRK) has biased composition (basic and acidic residues). The span at 266–282 (APPLKSGLSSLAGAPSL) shows a compositional bias: low complexity. Phosphoserine is present on residues S281 and S306. Y317 is subject to Phosphotyrosine.

The protein belongs to the CEP43 family. As to quaternary structure, homodimer. Part of a ternary complex that contains CEP350, CEP43 and MAPRE1. Interacts directly with CEP350 and MAPRE1. Interacts with CEP19. Interacts (via N-terminus) with CEP350 (via C-terminus).

The protein resides in the cytoplasm. Its subcellular location is the cytoskeleton. It is found in the microtubule organizing center. It localises to the centrosome. The protein localises to the centriole. The protein resides in the cilium basal body. Its function is as follows. Required for anchoring microtubules to the centrosomes. Required for ciliation. The sequence is that of Centrosomal protein 43 (CEP43) from Macaca fascicularis (Crab-eating macaque).